Reading from the N-terminus, the 195-residue chain is 3-isopropylmalate dehydratase small subunit (195 aa).

Belongs to the LeuD family. LeuD type 1 subfamily. As to quaternary structure, heterodimer of LeuC and LeuD.

The catalysed reaction is (2R,3S)-3-isopropylmalate = (2S)-2-isopropylmalate. It participates in amino-acid biosynthesis; L-leucine biosynthesis; L-leucine from 3-methyl-2-oxobutanoate: step 2/4. In terms of biological role, catalyzes the isomerization between 2-isopropylmalate and 3-isopropylmalate, via the formation of 2-isopropylmaleate. This chain is 3-isopropylmalate dehydratase small subunit, found in Salinispora tropica (strain ATCC BAA-916 / DSM 44818 / JCM 13857 / NBRC 105044 / CNB-440).